Here is a 266-residue protein sequence, read N- to C-terminus: GFP-like fluorescent chromoprotein cFP484 (266 aa).

Residues 104 to 106 (QYG) constitute a cross-link (2-iminomethyl-5-imidazolinone (Gln-Gly)). Y105 is subject to 2,3-didehydrotyrosine.

It belongs to the GFP family. In terms of processing, contains a chromophore consisting of modified amino acid residues. The chromophore is formed by autocatalytic backbone condensation between Xaa-N and Gly-(N+2), oxidation of Tyr-(N+1) to didehydrotyrosine, and formation of a double bond to the alpha-amino nitrogen of residue Xaa-N. Maturation of the chromophore requires nothing other than molecular oxygen. The precise stereochemistry of the tyrosine has not been determined. Tentacle and oral disk.

Pigment protein that is green in color. The sequence is that of GFP-like fluorescent chromoprotein cFP484 from Clavularia sp. (Brown star polyp).